The following is a 444-amino-acid chain: Transcription activator AFTR-2 (444 aa).

A DNA-binding region (zn(2)-C6 fungal-type) is located at residues 16–43 (CDFCTQSKLRCNKNKPSCRRCTLQQQPC). A disordered region spans residues 49–88 (RRTGRPPKHPRKANDCQEANGQHGDQDPVTSTPGGSYQQQ). Residues 50–59 (RTGRPPKHPR) are compositionally biased toward basic residues. Residues 76-88 (PVTSTPGGSYQQQ) show a composition bias toward polar residues.

The protein resides in the nucleus. In terms of biological role, transcription factor that regulates the expression of the gene clusters that mediate the biosynthesis of the host-selective toxins (HSTs) AF-toxins responsible for Alternaria black spot of strawberry disease by the strawberry pathotype. On cellular level, AF-toxins affect plasma membrane of susceptible cells and cause a sudden increase in loss of K(+) after a few minutes of toxin treatment. The chain is Transcription activator AFTR-2 from Alternaria alternata (Alternaria rot fungus).